The primary structure comprises 479 residues: Ribosomal RNA small subunit methyltransferase F (479 aa).

Residues 125–131 (AAAPGSK), Glu-149, Asp-176, and Asp-194 contribute to the S-adenosyl-L-methionine site. The active-site Nucleophile is the Cys-247.

This sequence belongs to the class I-like SAM-binding methyltransferase superfamily. RsmB/NOP family.

It localises to the cytoplasm. The enzyme catalyses cytidine(1407) in 16S rRNA + S-adenosyl-L-methionine = 5-methylcytidine(1407) in 16S rRNA + S-adenosyl-L-homocysteine + H(+). In terms of biological role, specifically methylates the cytosine at position 1407 (m5C1407) of 16S rRNA. The protein is Ribosomal RNA small subunit methyltransferase F of Escherichia coli O6:H1 (strain CFT073 / ATCC 700928 / UPEC).